Here is a 285-residue protein sequence, read N- to C-terminus: Polyamine aminopropyltransferase (285 aa).

Positions D5–K241 constitute a PABS domain. An S-methyl-5'-thioadenosine-binding site is contributed by Q35. Spermidine contacts are provided by H66 and D90. S-methyl-5'-thioadenosine is bound by residues D110 and D141 to G142. D160 acts as the Proton acceptor in catalysis. D160–D163 serves as a coordination point for spermidine. P167 provides a ligand contact to S-methyl-5'-thioadenosine.

Belongs to the spermidine/spermine synthase family. As to quaternary structure, homodimer or homotetramer.

The protein resides in the cytoplasm. The catalysed reaction is S-adenosyl 3-(methylsulfanyl)propylamine + putrescine = S-methyl-5'-thioadenosine + spermidine + H(+). It participates in amine and polyamine biosynthesis; spermidine biosynthesis; spermidine from putrescine: step 1/1. In terms of biological role, catalyzes the irreversible transfer of a propylamine group from the amino donor S-adenosylmethioninamine (decarboxy-AdoMet) to putrescine (1,4-diaminobutane) to yield spermidine. In Xanthomonas axonopodis pv. citri (strain 306), this protein is Polyamine aminopropyltransferase.